The primary structure comprises 249 residues: 3-deoxy-D-manno-octulosonic acid kinase (249 aa).

Residue Asp-175 is part of the active site.

It belongs to the protein kinase superfamily. KdkA/RfaP family.

The protein resides in the cell inner membrane. The catalysed reaction is an alpha-Kdo-(2-&gt;6)-lipid IVA + ATP = a 4-O-phospho-alpha-Kdo-(2-&gt;6)-lipid IVA + ADP + H(+). The protein operates within bacterial outer membrane biogenesis; LPS core biosynthesis. In terms of biological role, catalyzes the ATP-dependent phosphorylation of the 3-deoxy-D-manno-octulosonic acid (Kdo) residue in Kdo-lipid IV(A) at the 4-OH position. The protein is 3-deoxy-D-manno-octulosonic acid kinase of Xanthomonas campestris pv. campestris (strain 8004).